Consider the following 346-residue polypeptide: T-box protein 12 (346 aa).

Positions 33-48 (DEEDVEVDVEDVDDVD) are enriched in acidic residues. A disordered region spans residues 33-66 (DEEDVEVDVEDVDDVDLSSIPSKSPERSRGRPKI). The segment at residues 86-268 (LWAKFFDLGT…KNPFAKGFRD (183 aa)) is a DNA-binding region (T-box).

Its subcellular location is the nucleus. Functionally, transcription factor. Involved in cell fate determination; required to pattern the posterior hindgut. Involved in motor neuron fate determination and maintenance, acting as a transcriptional repressor to counteract gene activation by transcription factor unc-3 in a subset of motor neurons. Required throughout development to repress transcription by unc-3, probably acting by binding to specific promoter elements. Represses expression of VA and VB motor neuron-specific effector genes, such as DEG/ENaC channel del-1 and the innexin inx-12, in DA and DB motor neurons. Represses expression of transcription factor bnc-1, perhaps acting directly, in DA and DB motor neurons. The sequence is that of T-box protein 12 (mab-9) from Caenorhabditis elegans.